Consider the following 502-residue polypeptide: N-sulphoglucosamine sulphohydrolase (502 aa).

A signal peptide spans 1 to 20 (MSCPVPACCALLLVLGLCRA). Ca(2+) is bound by residues Asp31 and Asp32. Asn41 is a glycosylation site (N-linked (GlcNAc...) asparagine). Residue Cys70 coordinates Ca(2+). Catalysis depends on Cys70, which acts as the Nucleophile. The residue at position 70 (Cys70) is a 3-oxoalanine (Cys). Asn142 and Asn151 each carry an N-linked (GlcNAc...) asparagine glycan. Cys183 and Cys194 are oxidised to a cystine. A glycan (N-linked (GlcNAc...) asparagine) is linked at Asn264. The Ca(2+) site is built by Asp273 and Asn274. Residue Asn413 is glycosylated (N-linked (GlcNAc...) asparagine). The cysteines at positions 481 and 495 are disulfide-linked.

This sequence belongs to the sulfatase family. It depends on Ca(2+) as a cofactor. In terms of processing, the conversion to 3-oxoalanine (also known as C-formylglycine, FGly), of a serine or cysteine residue in prokaryotes and of a cysteine residue in eukaryotes, is critical for catalytic activity.

It localises to the lysosome. The catalysed reaction is N-sulfo-D-glucosamine + H2O = D-glucosamine + sulfate. Functionally, catalyzes a step in lysosomal heparan sulfate degradation. The polypeptide is N-sulphoglucosamine sulphohydrolase (SGSH) (Homo sapiens (Human)).